The following is a 392-amino-acid chain: MDAALLLNVEGVKKTILHGGTGELPNFITGSRVIFHFRTMKCDEERTVIDDSRQVDQPMHIIIGNMFKLEVWEILLTSMRVHEVAEFWCDTIHTGVYPILSRSLRQMAQGKDPTEWHVHTCGLANMFAYHTLGYEDLDELQKEPQPLIFVIELLQVDAPSDYQRETWNLSNHEKMKVVPVLHGEGNRLFKLGRYEEASSKYQEAIICLRNLQTKEKPWEVQWLKLEKMINTLTLNYCQCLLKKEEYYEVLEHTSDILRHHPGIVKAYYVRARAHAEVWNEAEAKADLQKVLELEPSMQKAVRRELRLLENRMAEKQEEERLRCRNMLSQGATQPPAEPPAQPPTAPPAELSTGPPADPPAEPPTAPPAELSTGPPAEPPAELPLSPGHSLQH.

In terms of domain architecture, PPIase FKBP-type spans 53 to 145; sequence RQVDQPMHII…DLDELQKEPQ (93 aa). TPR repeat units follow at residues 178-211, 230-263, and 264-297; these read VPVL…LRNL, NTLT…HPGI, and VKAY…EPSM. Residues 329-392 form a disordered region; sequence QGATQPPAEP…PLSPGHSLQH (64 aa). Pro residues-rich tracts occupy residues 335–346 and 355–366; these read PAEPPAQPPTAP and PADPPAEPPTAP.

Interacts with NUB1.

The protein localises to the cytoplasm. Its subcellular location is the nucleus. May be important in protein trafficking and/or protein folding and stabilization. In Macaca mulatta (Rhesus macaque), this protein is Aryl-hydrocarbon-interacting protein-like 1 (AIPL1).